A 1114-amino-acid chain; its full sequence is TBC1 domain family member 8B (1114 aa).

2 GRAM domains span residues 145–212 (LKFE…EKTS) and 285–353 (EQFK…DKTD). Residues 399-411 (TEVAVSSDSTGPS) are compositionally biased toward polar residues. Residues 399–420 (TEVAVSSDSTGPSENFEEQPLT) form a disordered region. The 188-residue stretch at 486–673 (GIPETLRGEL…NVVDCFFYDG (188 aa)) folds into the Rab-GAP TBC domain. Positions 857–892 (NRDSLALWTFRLLDENSDCLINFKEFSSAIDIMYNG) constitute an EF-hand domain. Disordered regions lie at residues 938-957 (SKPA…EKGK) and 1032-1061 (LHSP…KDLP). Basic and acidic residues predominate over residues 940–957 (PADEKETESGRNSPEKGK).

In terms of assembly, interacts (via domain Rab-GAP TBC) with RAB11B (in GTP-bound form).

The protein resides in the cytoplasm. The protein localises to the cytosol. In terms of biological role, involved in vesicular recycling, probably as a RAB11B GTPase-activating protein. The protein is TBC1 domain family member 8B (Tbc1d8b) of Mus musculus (Mouse).